The following is a 195-amino-acid chain: COMM domain-containing protein 3 (195 aa).

A COMM domain is found at 124-193; the sequence is HITDVSWRLE…DASKSLERAT (70 aa).

It belongs to the COMM domain-containing protein 3 family. As to quaternary structure, component of the commander complex consisting of the CCC subcomplex and the retriever subcomplex. Component of the CCC (COMMD/CCDC22/CCDC93) subcomplex consisting of COMMD1, COMMD2, COMMD3, COMMD4, COMMD5, COMMD6, COMMD7, COMMD8, COMMD9, COMMD10, CCDC22 and CCDC93; within the complex forms a heterodimer with COMMD2. Interacts with NFKB1/p105. Interacts with CCDC22, CCDC93, SCNN1B, CUL3, CUL4A, CUL4B, CUL5. As to expression, widely expressed with highest expression in thymus.

It localises to the cytoplasm. The protein resides in the nucleus. Scaffold protein in the commander complex that is essential for endosomal recycling of transmembrane cargos; the commander complex is composed of the CCC subcomplex and the retriever subcomplex. May modulate activity of cullin-RING E3 ubiquitin ligase (CRL) complexes. May down-regulate activation of NF-kappa-B. Modulates Na(+) transport in epithelial cells by regulation of apical cell surface expression of amiloride-sensitive sodium channel (ENaC) subunits. The polypeptide is COMM domain-containing protein 3 (COMMD3) (Homo sapiens (Human)).